A 327-amino-acid polypeptide reads, in one-letter code: Tagatose 1,6-diphosphate aldolase 2 (327 aa).

This sequence belongs to the aldolase LacD family.

It catalyses the reaction D-tagatofuranose 1,6-bisphosphate = D-glyceraldehyde 3-phosphate + dihydroxyacetone phosphate. It functions in the pathway carbohydrate metabolism; D-tagatose 6-phosphate degradation; D-glyceraldehyde 3-phosphate and glycerone phosphate from D-tagatose 6-phosphate: step 2/2. The sequence is that of Tagatose 1,6-diphosphate aldolase 2 (lacD2) from Streptococcus pyogenes serotype M3 (strain ATCC BAA-595 / MGAS315).